The sequence spans 864 residues: Protein translocase subunit SecA (864 aa).

Residues glutamine 87, 105-109, and aspartate 512 each bind ATP; that span reads GEGKT.

It belongs to the SecA family. In terms of assembly, monomer and homodimer. Part of the essential Sec protein translocation apparatus which comprises SecA, SecYEG and auxiliary proteins SecDF-YajC and YidC.

Its subcellular location is the cell inner membrane. The protein localises to the cytoplasm. The catalysed reaction is ATP + H2O + cellular proteinSide 1 = ADP + phosphate + cellular proteinSide 2.. Its function is as follows. Part of the Sec protein translocase complex. Interacts with the SecYEG preprotein conducting channel. Has a central role in coupling the hydrolysis of ATP to the transfer of proteins into and across the cell membrane, serving as an ATP-driven molecular motor driving the stepwise translocation of polypeptide chains across the membrane. This Buchnera aphidicola subsp. Cinara cedri (strain Cc) protein is Protein translocase subunit SecA.